The primary structure comprises 245 residues: Rhamnogalacturonan acetylesterase (245 aa).

The first 17 residues, 1-17 (MKSIALTSLSLLPSALA), serve as a signal peptide directing secretion. Ser-26 acts as the Nucleophile in catalysis. Cys-100 and Cys-108 are joined by a disulfide. Residues Asp-204 and His-207 contribute to the active site. A disulfide bridge links Cys-226 with Cys-244.

The protein belongs to the 'GDSL' lipolytic enzyme family.

The protein localises to the secreted. The catalysed reaction is Hydrolytic cleavage of 2-O-acetyl- or 3-O-acetyl groups of alpha-D-galacturonic acid in rhamnogalacturonan I.. Its function is as follows. Plays a key role in the degradation of rhamnogalacturonan in the cell wall. Involved in degradation of pectin. This chain is Rhamnogalacturonan acetylesterase, found in Emericella nidulans (strain FGSC A4 / ATCC 38163 / CBS 112.46 / NRRL 194 / M139) (Aspergillus nidulans).